Here is a 227-residue protein sequence, read N- to C-terminus: Probable cytokinin riboside 5'-monophosphate phosphoribohydrolase LOGL9 (227 aa).

Residues 1-15 (MYISSPHTSHFTSID) are compositionally biased toward polar residues. The disordered stretch occupies residues 1–26 (MYISSPHTSHFTSIDRSPAVVSESDR). Substrate-binding positions include Glu117, 135-136 (RK), and 152-158 (GYGTLEE).

It belongs to the LOG family. In terms of tissue distribution, expressed in roots, leaves and stems.

It carries out the reaction N(6)-(dimethylallyl)adenosine 5'-phosphate + H2O = N(6)-dimethylallyladenine + D-ribose 5-phosphate. The enzyme catalyses 9-ribosyl-trans-zeatin 5'-phosphate + H2O = trans-zeatin + D-ribose 5-phosphate. Functionally, cytokinin-activating enzyme working in the direct activation pathway. Phosphoribohydrolase that converts inactive cytokinin nucleotides to the biologically active free-base forms. In Oryza sativa subsp. japonica (Rice), this protein is Probable cytokinin riboside 5'-monophosphate phosphoribohydrolase LOGL9 (LOGL9).